The chain runs to 425 residues: MVATPVKQKYDIKDISLAPQGRQRIEWAAREMPVLKQIRERFAQEKPFAGIRLVACCHVTTETANLAIALHAGGADSLLIASNPLSTQDDVAACLVADYGIPVYAIKGEDNETYHRHVQIALDHRPNIIIDDGSDVVATLVQERQHQLSDIIGTTEETTTGIVRLRAMFNDGVLTFPAMNVNDADTKHFYDNRYGTGQSTLDGIIRATNILLAGKTIVVAGYGWCGKGVAMRAKGMGADVIVTEISPVPAIEAAMDGFRVMPMAEAAHQGDIFITVTGNKHVIRPEHFAVMKDGAIVCNSGHFDIEIDLKSLKEQAKEVKEVRNFTEQYILPNGKSIIVIGEGRLVNLAAAEGHPSAVMDMSFANQALACEHLVKNKGQLEPGMHSIPVEVDQEIARLKLQAMGIAIDSLTPEQVEYINSWASGT.

The substrate site is built by Thr-60, Asp-132, and Glu-157. 158–160 (TTT) contributes to the NAD(+) binding site. Positions 187 and 191 each coordinate substrate. Residues Asn-192, 221–226 (GYGWCG), Glu-244, Asn-279, 300–302 (SGH), and Asn-347 each bind NAD(+).

The protein belongs to the adenosylhomocysteinase family. It depends on NAD(+) as a cofactor.

The protein resides in the cytoplasm. It carries out the reaction S-adenosyl-L-homocysteine + H2O = L-homocysteine + adenosine. It participates in amino-acid biosynthesis; L-homocysteine biosynthesis; L-homocysteine from S-adenosyl-L-homocysteine: step 1/1. Functionally, may play a key role in the regulation of the intracellular concentration of adenosylhomocysteine. The chain is Adenosylhomocysteinase from Synechocystis sp. (strain ATCC 27184 / PCC 6803 / Kazusa).